Consider the following 174-residue polypeptide: FAD synthase (174 aa).

Residues 34–35 (TF), 39–42 (HPGH), Asp-119, and Tyr-147 each bind ATP.

It belongs to the archaeal FAD synthase family. Homodimer. It depends on a divalent metal cation as a cofactor.

It catalyses the reaction FMN + ATP + H(+) = FAD + diphosphate. Its pathway is cofactor biosynthesis; FAD biosynthesis; FAD from FMN: step 1/1. Catalyzes the transfer of the AMP portion of ATP to flavin mononucleotide (FMN) to produce flavin adenine dinucleotide (FAD) coenzyme. This is FAD synthase from Methanococcus voltae (strain ATCC BAA-1334 / A3).